Consider the following 55-residue polypeptide: MAKAVTIKVKLVSSADTGFYYVAKKNSRTMTEKMVKKKYDPVARKHVEFREAKIK.

This sequence belongs to the bacterial ribosomal protein bL33 family.

In Bradyrhizobium sp. (strain BTAi1 / ATCC BAA-1182), this protein is Large ribosomal subunit protein bL33.